The primary structure comprises 218 residues: MNQSLLSEFGTPEQRVTHAIEALRAGRGVMVLDDEDRENEGDMIFAAETMTVEQMALTIRHGSGIVCLCLNEERLEQLDLPMMVQNNTSAYGTGFTVTIEAAEGVTTGVSATDRLTTIRAAIADDARPSDLNRPGHVFPLRARSGGVLTRGGHTEATLDLVTLAGFKPAGVLCELTNDDGSMAHAPEVIVFARQHDMPVVTIEDLVSYRRSRETLQAS.

D-ribulose 5-phosphate is bound by residues 37–38, aspartate 42, 150–154, and glutamate 174; these read RE and RGGHT. Residue glutamate 38 coordinates Mg(2+). Histidine 153 is a binding site for Mg(2+).

This sequence belongs to the DHBP synthase family. As to quaternary structure, homodimer. Mg(2+) is required as a cofactor. The cofactor is Mn(2+).

The enzyme catalyses D-ribulose 5-phosphate = (2S)-2-hydroxy-3-oxobutyl phosphate + formate + H(+). The protein operates within cofactor biosynthesis; riboflavin biosynthesis; 2-hydroxy-3-oxobutyl phosphate from D-ribulose 5-phosphate: step 1/1. Its function is as follows. Catalyzes the conversion of D-ribulose 5-phosphate to formate and 3,4-dihydroxy-2-butanone 4-phosphate. This Erwinia tasmaniensis (strain DSM 17950 / CFBP 7177 / CIP 109463 / NCPPB 4357 / Et1/99) protein is 3,4-dihydroxy-2-butanone 4-phosphate synthase.